The sequence spans 364 residues: Pectinesterase 1 (364 aa).

Positions 1–22 (MSCIAVEAVLLGILLYIPIVLS) are cleaved as a signal peptide. N-linked (GlcNAc...) asparagine glycosylation occurs at Asn-103. Residue Asp-220 is part of the active site.

This sequence belongs to the pectinesterase family. In terms of processing, glycosylated. Expressed in pollen.

It is found in the secreted. It carries out the reaction [(1-&gt;4)-alpha-D-galacturonosyl methyl ester](n) + n H2O = [(1-&gt;4)-alpha-D-galacturonosyl](n) + n methanol + n H(+). Its pathway is glycan metabolism; pectin degradation; 2-dehydro-3-deoxy-D-gluconate from pectin: step 1/5. Catalyzes the demethylesterification of homogalacturonan components of pectin. May be involved in pollen tube development. The polypeptide is Pectinesterase 1 (Olea europaea (Common olive)).